Reading from the N-terminus, the 401-residue chain is Argininosuccinate synthase (401 aa).

Residue 8 to 16 (AYSGGLDTS) participates in ATP binding. Tyr85 contributes to the L-citrulline binding site. ATP is bound at residue Gly115. L-aspartate contacts are provided by Thr117, Asn121, and Asp122. Asn121 is a binding site for L-citrulline. L-citrulline contacts are provided by Arg125, Ser173, Glu258, and Tyr270.

This sequence belongs to the argininosuccinate synthase family. Type 1 subfamily. As to quaternary structure, homotetramer.

The protein resides in the cytoplasm. It catalyses the reaction L-citrulline + L-aspartate + ATP = 2-(N(omega)-L-arginino)succinate + AMP + diphosphate + H(+). It participates in amino-acid biosynthesis; L-arginine biosynthesis; L-arginine from L-ornithine and carbamoyl phosphate: step 2/3. This Staphylococcus aureus (strain bovine RF122 / ET3-1) protein is Argininosuccinate synthase.